We begin with the raw amino-acid sequence, 94 residues long: FXYD domain-containing ion transport regulator 6 (94 aa).

The first 17 residues, Met-1 to Ala-17, serve as a signal peptide directing secretion. Residues Ser-18 to Gln-34 lie on the Extracellular side of the membrane. Residues Thr-35–Ser-57 form a helical membrane-spanning segment. The Cytoplasmic segment spans residues Arg-58–Asn-94.

The protein belongs to the FXYD family. Regulatory subunit of the sodium/potassium-transporting ATPase which is composed of a catalytic alpha subunit, a non-catalytic beta subunit and an additional regulatory subunit. The regulatory subunit, a member of the FXYD protein family, modulates the enzymatic activity in a tissue- and isoform-specific way by changing affinities of the Na+/K+-ATPase toward Na(+), K(+) or ATP.

Its subcellular location is the cell membrane. Its function is as follows. Associates with and regulates the activity of the sodium/potassium-transporting ATPase (NKA) which catalyzes the hydrolysis of ATP coupled with the exchange of Na(+) and K(+) ions across the plasma membrane. Reduces the apparent affinity for intracellular Na(+) with no change in the apparent affinity for extracellular K(+). In addition to modulating NKA kinetics, may also function as a regulator of NKA localization to the plasma membrane. This is FXYD domain-containing ion transport regulator 6 (Fxyd6) from Mus musculus (Mouse).